A 106-amino-acid chain; its full sequence is L-rhamnose mutarotase (106 aa).

Position 20 (tyrosine 20) interacts with substrate. The active-site Proton donor is histidine 24. Substrate contacts are provided by residues tyrosine 43 and 78–79 (WW).

It belongs to the rhamnose mutarotase family. Homodimer.

It is found in the cytoplasm. The catalysed reaction is alpha-L-rhamnose = beta-L-rhamnose. It participates in carbohydrate metabolism; L-rhamnose metabolism. Its function is as follows. Involved in the anomeric conversion of L-rhamnose. This is L-rhamnose mutarotase from Brucella anthropi (strain ATCC 49188 / DSM 6882 / CCUG 24695 / JCM 21032 / LMG 3331 / NBRC 15819 / NCTC 12168 / Alc 37) (Ochrobactrum anthropi).